The following is a 257-amino-acid chain: UPF0246 protein Sputcn32_1053 (257 aa).

This sequence belongs to the UPF0246 family.

This Shewanella putrefaciens (strain CN-32 / ATCC BAA-453) protein is UPF0246 protein Sputcn32_1053.